We begin with the raw amino-acid sequence, 280 residues long: Chaperone protein DnaJ 2 (280 aa).

Residues 6-70 (DYYAILGVPR…EKRRIYDTYG (65 aa)) enclose the J domain.

It belongs to the DnaJ family. Forms a heterononamer with DnaJ and DafA in the resting state. Three copies of each protein are present in the complex.

The protein localises to the cytoplasm. Does not influence ATP binding or hydrolysis nor ADP release. Exerts influence on the interaction of DnaK with substrates; in the presence of DafA, DnaJ inhibits substrate binding, and substrate already bound to DnaK is displaced by DnaJ and DafA. This is Chaperone protein DnaJ 2 (dnaJ2) from Thermus thermophilus (strain ATCC 27634 / DSM 579 / HB8).